Consider the following 236-residue polypeptide: uncharacterized protein (236 aa).

To M.tuberculosis Rv2557.

This is an uncharacterized protein from Mycobacterium tuberculosis (strain CDC 1551 / Oshkosh).